The following is a 658-amino-acid chain: Glycogen debranching enzyme (658 aa).

Aspartate 335 functions as the Nucleophile in the catalytic mechanism. Catalysis depends on glutamate 370, which acts as the Proton donor. The segment covering 457 to 468 (NDANGEGNRDGT) has biased composition (basic and acidic residues). The tract at residues 457–481 (NDANGEGNRDGTDSNFSNNHGTEGL) is disordered.

This sequence belongs to the glycosyl hydrolase 13 family.

It carries out the reaction Hydrolysis of (1-&gt;6)-alpha-D-glucosidic linkages to branches with degrees of polymerization of three or four glucose residues in limit dextrin.. It participates in glycan degradation; glycogen degradation. Functionally, removes maltotriose and maltotetraose chains that are attached by 1,6-alpha-linkage to the limit dextrin main chain, generating a debranched limit dextrin. The protein is Glycogen debranching enzyme of Pectobacterium atrosepticum (strain SCRI 1043 / ATCC BAA-672) (Erwinia carotovora subsp. atroseptica).